The chain runs to 423 residues: Maintenance of mitochondrial morphology protein 1 (423 aa).

The Lumenal portion of the chain corresponds to 1–20; it reads MTIPAPIPDKAESSLSFTQG. A helical transmembrane segment spans residues 21–41; it reads LLLGQLSIVILIGAFIKFFIF. Residues 42–423 lie on the Cytoplasmic side of the membrane; it reads GDPPSPDVTA…PGSMPGLSMT (382 aa). The region spanning 115–327 is the SMP-LTD domain; the sequence is QPESLDWFNV…EPRFQQIELP (213 aa). Disordered stretches follow at residues 332 to 372 and 387 to 423; these read RKKN…KEVE and SLDVPDEGSEDGLRFRRKSKGRDEYAMPGSMPGLSMT. Positions 355–372 are enriched in basic and acidic residues; that stretch reads RSRDVERDLREEARKEVE.

It belongs to the MMM1 family. In terms of assembly, homodimer. Component of the ER-mitochondria encounter structure (ERMES) or MDM complex, composed of MMM1, MDM10, MDM12 and MDM34. An MMM1 homodimer associates with one molecule of MDM12 on each side in a pairwise head-to-tail manner, and the SMP-LTD domains of MMM1 and MDM12 generate a continuous hydrophobic tunnel for phospholipid trafficking.

The protein localises to the endoplasmic reticulum membrane. In terms of biological role, component of the ERMES/MDM complex, which serves as a molecular tether to connect the endoplasmic reticulum (ER) and mitochondria. Components of this complex are involved in the control of mitochondrial shape and protein biogenesis, and function in nonvesicular lipid trafficking between the ER and mitochondria. The MDM12-MMM1 subcomplex functions in the major beta-barrel assembly pathway that is responsible for biogenesis of all outer membrane beta-barrel proteins, and acts in a late step after the SAM complex. The MDM10-MDM12-MMM1 subcomplex further acts in the TOM40-specific pathway after the action of the MDM12-MMM1 complex. Essential for establishing and maintaining the structure of mitochondria and maintenance of mtDNA nucleoids. This is Maintenance of mitochondrial morphology protein 1 from Botryotinia fuckeliana (strain B05.10) (Noble rot fungus).